The following is a 549-amino-acid chain: MANVVVTGEALDKSIREVVRILEDAVGCTAGPKGLTVAISKPYGSPEITKDGYKVMKSIKPEEPLAVAIANIITQSASQCNDKVGDGTTTCSILTAKVIEEVSRAKAAGADTISIKNGILKAKEAVLTALLSMKREVASEDEIAQVATISANGDKNIGGKIAQCVREVGKDGVITVEESKGFKDLEVERTDGMQFDRGYLSPYFVTNAEKMLVEFENPYIFLTEKKINLVQSILPVLENVARSGRPLLIIAEDVEGEALSTLVLNKLRGGLQVAAVKAPGFGDRRKDMLGDIAVIAGAKYVVNDELAVKVEDITLDDLGTAKTVRITKDTTTIIGSVDSNADSITSRISQIKSQIEVSSSDYDKEKLKERLAKLSGGVAVLKVGGSSEVEVKERKDRVEDALHATRAAVEEGVVPGGGAALLYTLASLDGIKGKNDDEQLGINIIKRAVCAPIKRIIKNSGSEEAPCVIQHLMKQNDKELIFNVDTMNYANAFASGVMDPLKVVRIAFDLAVSLAAVFMTLNAVVVDVPSKEDTAGGGAAGGMGGMGGF.

Residues threonine 29–proline 32, lysine 50, aspartate 86–threonine 90, glycine 417, and aspartate 499 each bind ATP.

It belongs to the chaperonin (HSP60) family. In terms of assembly, forms a cylinder of 14 subunits composed of two heptameric rings stacked back-to-back. Interacts with the co-chaperonin GroES.

Its subcellular location is the cytoplasm. It carries out the reaction ATP + H2O + a folded polypeptide = ADP + phosphate + an unfolded polypeptide.. In terms of biological role, together with its co-chaperonin GroES, plays an essential role in assisting protein folding. The GroEL-GroES system forms a nano-cage that allows encapsulation of the non-native substrate proteins and provides a physical environment optimized to promote and accelerate protein folding. The chain is Chaperonin GroEL from Anaplasma marginale (strain Florida).